A 169-amino-acid chain; its full sequence is Myosin regulatory light chain 11 (169 aa).

A N,N,N-trimethylalanine modification is found at alanine 2. A phosphoserine mark is found at serine 15 and serine 16. A phosphothreonine mark is found at threonine 25 and threonine 35. Residues 25–60 (TQIQEFKEAFTVIDQNRDGIIDKEDLRDTFAAMGRL) enclose the EF-hand 1 domain. Residues aspartate 38, asparagine 40, aspartate 42, and aspartate 49 each contribute to the Ca(2+) site. Serine 75 is modified (phosphoserine). 2 EF-hand domains span residues 95–130 (DPEDVITGAFKVLDPEGKGTIKKKFLEELLTTQCDR) and 131–166 (FSQEEIKNMWAAFPPDVGGNVDYKNICYVITHGDAK). Position 101 is a phosphothreonine (threonine 101).

Myosin is a hexamer of 2 heavy chains and 4 light chains. In terms of tissue distribution, expressed in fetal and adult skeletal muscle.

Functionally, myosin regulatory subunit that plays an essential role to maintain muscle integrity during early development. Plays a role in muscle contraction. This chain is Myosin regulatory light chain 11, found in Homo sapiens (Human).